A 968-amino-acid chain; its full sequence is Polycystin-2 (968 aa).

The span at 1 to 11 shows a compositional bias: polar residues; the sequence is MVNSSRVQPQQ. Disordered stretches follow at residues 1 to 28 and 58 to 181; these read MVNS…DPGR and RIRQ…LPLE. The Cytoplasmic portion of the chain corresponds to 1–219; the sequence is MVNSSRVQPQ…STNREKYLKS (219 aa). Low complexity predominate over residues 62–83; it reads AAARDPPAGAAASPSPPLSSCS. Phosphoserine occurs at positions 76 and 80. Over residues 95-107 the composition is skewed to acidic residues; it reads EAEEEEEEVEGEE. Residues 123–139 are compositionally biased toward low complexity; the sequence is RRSAASSAVSSVGARSR. R137 bears the Omega-N-methylarginine mark. Residues 220–241 form a helical membrane-spanning segment; that stretch reads VLRELVTYLLFLIVLCILTYGM. Residues 242-468 are Extracellular-facing; sequence MSSNVYYYTR…PLKLIRYVTT (227 aa). Residues N299 and N305 are each glycosylated (N-linked (GlcNAc...) asparagine). A glycan (N-linked (GlcNAc...) (complex) asparagine) is linked at N328. A disulfide bridge links C331 with C344. N-linked (GlcNAc...) asparagine glycosylation is found at N362 and N375. Residues 469 to 489 form a helical membrane-spanning segment; that stretch reads FDFFLAACEIIFCFFIFYYVV. Over 490 to 505 the chain is Cytoplasmic; the sequence is EEILEIRIHKLHYFRS. Residues 506–526 form a helical membrane-spanning segment; the sequence is FWNCLDVVIVVLSVVAIGINI. The Extracellular portion of the chain corresponds to 527–552; the sequence is YRTSNVEVLLQFLEDQNTFPNFEHLA. A helical membrane pass occupies residues 553–573; sequence YWQIQFNNIAAVTVFFVWIKL. Position 557 (Q557) interacts with cholesterol. Residues 574–597 lie on the Cytoplasmic side of the membrane; sequence FKFINFNRTMSQLSTTMSRCAKDL. The helical transmembrane segment at 598 to 619 threads the bilayer; it reads FGFAIMFFIIFLAYAQLAYLVF. Residues 620–631 are Extracellular-facing; it reads GTQVDDFSTFQE. The segment at residues 632–646 is an intramembrane region (pore-forming); sequence CIFTQFRIILGDINF. L641 is a Ca(2+) binding site. Positions 641 to 643 match the Selectivity filter motif; that stretch reads LGD. The Extracellular portion of the chain corresponds to 647–654; sequence AEIEEANR. A helical transmembrane segment spans residues 655-675; sequence VLGPIYFTTFVFFMFFILLNM. At 676-968 the chain is on the cytoplasmic side; that stretch reads FLAIINDTYS…GGNGSSNVHV (293 aa). Residues 750 to 785 enclose the EF-hand domain; sequence HTDAEIEAIFTKYDQDGDQELTEHEHQQMRDDLEKE. Residues D763, D765, D767, E769, and E774 each coordinate Ca(2+). The disordered stretch occupies residues 764-831; the sequence is QDGDQELTEH…HSSRRRGSIS (68 aa). Residues 770–795 show a composition bias toward basic and acidic residues; sequence LTEHEHQQMRDDLEKEREDLDLDHSS. Residues 796–807 show a composition bias toward low complexity; that stretch reads LPRPMSSRSFPR. A phosphoserine mark is found at S801, S808, S812, and S829. The segment at 803 to 822 is linker; that stretch reads RSFPRSLDDSEEDDDEDSGH. Residues 810–821 are important for interaction with PACS1 and PACS2; it reads DDSEEDDDEDSG. A coiled-coil region spans residues 833-872; sequence GVSYEEFQVLVRRVDRMEHSIGSIVSKIDAVIVKLEIMER. The segment at 917–968 is disordered; sequence ESDDAASQISHGLGTPVGLNGQPRPRSSRPSSSQSTEGMEGAGGNGSSNVHV. Residues 938-951 show a composition bias toward low complexity; it reads QPRPRSSRPSSSQS.

The protein belongs to the polycystin family. As to quaternary structure, homotetramer. Component of the heterotetrameric polycystin channel complex with PKD1; the tetramer contains one PKD1 chain and three PKD2 chains. Isoform 1 interacts with PKD1 while isoform 3 does not. Interacts with PKD1L1; probably forms a Ca(2+) channel. Interacts with CD2AP. Interacts with HAX1. Interacts with NEK8. Part of a complex containing AKAP5, ADCY5, ADCY6 and PDE4C. Interacts (via C-terminus) with TRPV4 (via C-terminus). Interacts (via C-terminal acidic region) with PACS1 and PACS2; these interactions retain the protein in the endoplasmic reticulum and prevent trafficking to the cell membrane. Interacts with TMEM33. Form a heterotetramer with TRPC1 with a 2:2 stoichiometry; has distinct channel properties separate from PKD2 or TRPC1 homomers alone. Interacts with TMEM120A; TMEM120A inhibits PKD2 channel activity through the physical association of PKD2 with TMEM120A. Interacts (via N-terminus) with RYR2; regulates RYR2 channel activity. Post-translationally, phosphorylated. Phosphorylation is important for protein function; a mutant that lacks the N-terminal phosphorylation sites cannot complement a zebrafish pkd2-deficient mutant. PKD-mediated phosphorylation at the C-terminus regulates its function in the release of Ca(2+) stores from the endoplasmic reticulum. Phosphorylation at Ser-812 regulates PKD2 trafficking. Phosphorylation at Ser-76 is required for PKD2 trafficking to or retention at the lateral plasma membrane. Phosphorylation at Ser-801, Ser-812 and Ser-829 regulates PKD2 channel activity. N-glycosylated. The four subunits in a tetramer probably differ in the extent of glycosylation; simultaneous glycosylation of all experimentally validated sites would probably create steric hindrance. Thus, glycosylation at Asn-305 is not compatible with glycosylation at Asn-328; only one of these two residues is glycosylated at a given time. In terms of processing, sumoylated by SUMO1; sumoylation regulates PKD2 membrane recycling and is necessary for intravascular pressure-induced arterial contractility. Detected in fetal and adult kidney. Detected at the thick ascending limb of the loop of Henle, at distal tubules, including the distal convoluted tubule and cortical collecting tubules, with weak staining of the collecting duct. Detected on placenta syncytiotrophoblasts (at protein level). Strongly expressed in ovary, fetal and adult kidney, testis, and small intestine. Not detected in peripheral leukocytes.

The protein localises to the cell projection. The protein resides in the cilium membrane. It localises to the endoplasmic reticulum membrane. It is found in the cell membrane. Its subcellular location is the basolateral cell membrane. The protein localises to the cytoplasmic vesicle membrane. The protein resides in the golgi apparatus. It localises to the vesicle. It is found in the secreted. Its subcellular location is the extracellular exosome. It carries out the reaction K(+)(in) = K(+)(out). It catalyses the reaction Na(+)(in) = Na(+)(out). The catalysed reaction is Ca(2+)(in) = Ca(2+)(out). Channel activity is regulated by phosphorylation. Channel activity is regulated by intracellular Ca(2+). At the endoplasmic reticulum membrane (ER), TMEM33 enhances its channel activity. TMEM120A inhibits the channel activity of PKD2, and mediates mechanosensitivity of the PKD2-TMEM120A channel complex. PKD1/PKD2 complex on the plasma membrane is activated by PKD1 N-terminus. Functionally, forms a nonselective cation channel. Can function as a homotetrameric ion channel or can form heteromer with PKD1. Displays distinct function depending on its subcellular localization and regulation by its binding partners. In primary cilium functions as a cation channel, with a preference for monovalent cations over divalent cations that allows K(+), Na(+) and Ca(2+) influx, with low selectivity for Ca(2+). Involved in fluid-flow mechanosensation by the primary cilium in renal epithelium. In the endoplasmic reticulum, likely functions as a K(+) channel to facilitate Ca(2+) release. The heterotetrameric PKD1/PKD2 channel has higher Ca(2+) permeability than homomeric PKD2 channel and acts as a primarily Ca(2+)-permeable channel. Interacts with and acts as a regulator of a number of other channels, such as TRPV4, TRPC1, IP3R, RYR2, ultimately further affecting intracellular signaling, to modulate intracellular Ca(2+) signaling. Together with TRPV4, forms mechano- and thermosensitive channels in cilium. In cardiomyocytes, PKD2 modulates Ca(2+) release from stimulated RYR2 receptors through direct association. Also involved in left-right axis specification via its role in sensing nodal flow; forms a complex with PKD1L1 in cilia to facilitate flow detection in left-right patterning. Acts as a regulator of cilium length together with PKD1. Mediates systemic blood pressure and contributes to the myogenic response in cerebral arteries though vasoconstriction. This chain is Polycystin-2, found in Homo sapiens (Human).